The following is a 232-amino-acid chain: Phosphatidylserine decarboxylase proenzyme (232 aa).

The active-site Schiff-base intermediate with substrate; via pyruvic acid is serine 201. Serine 201 bears the Pyruvic acid (Ser); by autocatalysis mark.

The protein belongs to the phosphatidylserine decarboxylase family. PSD-A subfamily. In terms of assembly, heterodimer of a large membrane-associated beta subunit and a small pyruvoyl-containing alpha subunit. Requires pyruvate as cofactor. In terms of processing, is synthesized initially as an inactive proenzyme. Formation of the active enzyme involves a self-maturation process in which the active site pyruvoyl group is generated from an internal serine residue via an autocatalytic post-translational modification. Two non-identical subunits are generated from the proenzyme in this reaction, and the pyruvate is formed at the N-terminus of the alpha chain, which is derived from the carboxyl end of the proenzyme. The post-translation cleavage follows an unusual pathway, termed non-hydrolytic serinolysis, in which the side chain hydroxyl group of the serine supplies its oxygen atom to form the C-terminus of the beta chain, while the remainder of the serine residue undergoes an oxidative deamination to produce ammonia and the pyruvoyl prosthetic group on the alpha chain.

It is found in the cell membrane. The enzyme catalyses a 1,2-diacyl-sn-glycero-3-phospho-L-serine + H(+) = a 1,2-diacyl-sn-glycero-3-phosphoethanolamine + CO2. It functions in the pathway phospholipid metabolism; phosphatidylethanolamine biosynthesis; phosphatidylethanolamine from CDP-diacylglycerol: step 2/2. Its function is as follows. Catalyzes the formation of phosphatidylethanolamine (PtdEtn) from phosphatidylserine (PtdSer). The protein is Phosphatidylserine decarboxylase proenzyme of Mycolicibacterium gilvum (strain PYR-GCK) (Mycobacterium gilvum (strain PYR-GCK)).